The following is a 394-amino-acid chain: Elongation factor Tu 1 (394 aa).

The tr-type G domain maps to 10 to 204 (KPHVNVGTIG…ALDSYIPEPE (195 aa)). Residues 19 to 26 (GHVDHGKT) form a G1 region. 19–26 (GHVDHGKT) serves as a coordination point for GTP. Position 26 (Thr26) interacts with Mg(2+). Positions 60–64 (GITIN) are G2. Positions 81–84 (DCPG) are G3. Residues 81–85 (DCPGH) and 136–139 (NKCD) each bind GTP. Positions 136–139 (NKCD) are G4. Residues 174-176 (SAL) are G5.

It belongs to the TRAFAC class translation factor GTPase superfamily. Classic translation factor GTPase family. EF-Tu/EF-1A subfamily. As to quaternary structure, monomer.

Its subcellular location is the cytoplasm. The enzyme catalyses GTP + H2O = GDP + phosphate + H(+). Functionally, GTP hydrolase that promotes the GTP-dependent binding of aminoacyl-tRNA to the A-site of ribosomes during protein biosynthesis. This Shewanella oneidensis (strain ATCC 700550 / JCM 31522 / CIP 106686 / LMG 19005 / NCIMB 14063 / MR-1) protein is Elongation factor Tu 1.